A 220-amino-acid chain; its full sequence is Charged multivesicular body protein 3 (220 aa).

A lipid anchor (N-myristoyl glycine) is attached at glycine 2. Residues 22 to 54 are a coiled coil; it reads KIRKEMRVIDRQIRDIQREQEKVKRSIKESAKK. An important for autoinhibitory function region spans residues 168 to 169; that stretch reads IL. Residues 181-220 form a disordered region; it reads PSKVTDALPEPEITGAMAASDEEEEEDLEAMHSRLAALRS. The MIT-interacting motif signature appears at 201-209; sequence DEEEEEDLE. Interaction with STAMBP regions lie at residues 203-207 and 219-220; these read EEEED and RS.

This sequence belongs to the SNF7 family. Probable core component of the endosomal sorting required for transport complex III (ESCRT-III). ESCRT-III components are thought to multimerize to form a flat lattice on the perimeter membrane of the endosome. Several assembly forms of ESCRT-III may exist that interact and act sequentially.

It is found in the cytoplasm. The protein resides in the cytosol. It localises to the membrane. Its subcellular location is the endosome. The protein localises to the late endosome membrane. In terms of biological role, probable core component of the endosomal sorting required for transport complex III (ESCRT-III) which is involved in multivesicular bodies (MVBs) formation and sorting of endosomal cargo proteins into MVBs. MVBs contain intraluminal vesicles (ILVs) that are generated by invagination and scission from the limiting membrane of the endosome and mostly are delivered to lysosomes enabling degradation of membrane proteins, such as stimulated growth factor receptors, lysosomal enzymes and lipids. Involved in late stages of cytokinesis. Plays a role in endosomal sorting/trafficking of EGF receptor. This Xenopus laevis (African clawed frog) protein is Charged multivesicular body protein 3 (chmp3).